The following is a 78-amino-acid chain: DNA-directed RNA polymerase subunit Rpo5 (78 aa).

Belongs to the archaeal Rpo5/eukaryotic RPB5 RNA polymerase subunit family. In terms of assembly, part of the RNA polymerase complex.

The protein resides in the cytoplasm. The enzyme catalyses RNA(n) + a ribonucleoside 5'-triphosphate = RNA(n+1) + diphosphate. Functionally, DNA-dependent RNA polymerase (RNAP) catalyzes the transcription of DNA into RNA using the four ribonucleoside triphosphates as substrates. This chain is DNA-directed RNA polymerase subunit Rpo5, found in Methanococcoides burtonii (strain DSM 6242 / NBRC 107633 / OCM 468 / ACE-M).